We begin with the raw amino-acid sequence, 475 residues long: Sulfate adenylyltransferase subunit 1 (475 aa).

A tr-type G domain is found at 25 to 239 (KSLLRFLTCG…EVLETVEIQR (215 aa)). The G1 stretch occupies residues 34–41 (GSVDDGKS). 34 to 41 (GSVDDGKS) contributes to the GTP binding site. Residues 92-96 (GITID) are G2. Positions 113-116 (DTPG) are G3. GTP is bound by residues 113 to 117 (DTPGH) and 168 to 171 (NKMD). The segment at 168 to 171 (NKMD) is G4. The segment at 206-208 (SAL) is G5.

The protein belongs to the TRAFAC class translation factor GTPase superfamily. Classic translation factor GTPase family. CysN/NodQ subfamily. Heterodimer composed of CysD, the smaller subunit, and CysN.

The enzyme catalyses sulfate + ATP + H(+) = adenosine 5'-phosphosulfate + diphosphate. The protein operates within sulfur metabolism; hydrogen sulfide biosynthesis; sulfite from sulfate: step 1/3. With CysD forms the ATP sulfurylase (ATPS) that catalyzes the adenylation of sulfate producing adenosine 5'-phosphosulfate (APS) and diphosphate, the first enzymatic step in sulfur assimilation pathway. APS synthesis involves the formation of a high-energy phosphoric-sulfuric acid anhydride bond driven by GTP hydrolysis by CysN coupled to ATP hydrolysis by CysD. The chain is Sulfate adenylyltransferase subunit 1 from Escherichia fergusonii (strain ATCC 35469 / DSM 13698 / CCUG 18766 / IAM 14443 / JCM 21226 / LMG 7866 / NBRC 102419 / NCTC 12128 / CDC 0568-73).